We begin with the raw amino-acid sequence, 339 residues long: Ketol-acid reductoisomerase (NADP(+)) (339 aa).

Positions 1–182 constitute a KARI N-terminal Rossmann domain; that stretch reads MPNRYYEKDG…GCLKAGVIDT (182 aa). Residues 25–28, Ser-51, Ser-53, and 83–86 contribute to the NADP(+) site; these read YGSQ and DHIQ. His-108 is an active-site residue. Gly-134 lines the NADP(+) pocket. The KARI C-terminal knotted domain occupies 183 to 328; that stretch reads NFREETESDL…RELREMMTFL (146 aa). Asp-191, Glu-195, Glu-227, and Glu-231 together coordinate Mg(2+). Ser-252 is a substrate binding site.

The protein belongs to the ketol-acid reductoisomerase family. It depends on Mg(2+) as a cofactor.

The catalysed reaction is (2R)-2,3-dihydroxy-3-methylbutanoate + NADP(+) = (2S)-2-acetolactate + NADPH + H(+). It catalyses the reaction (2R,3R)-2,3-dihydroxy-3-methylpentanoate + NADP(+) = (S)-2-ethyl-2-hydroxy-3-oxobutanoate + NADPH + H(+). Its pathway is amino-acid biosynthesis; L-isoleucine biosynthesis; L-isoleucine from 2-oxobutanoate: step 2/4. It functions in the pathway amino-acid biosynthesis; L-valine biosynthesis; L-valine from pyruvate: step 2/4. Its function is as follows. Involved in the biosynthesis of branched-chain amino acids (BCAA). Catalyzes an alkyl-migration followed by a ketol-acid reduction of (S)-2-acetolactate (S2AL) to yield (R)-2,3-dihydroxy-isovalerate. In the isomerase reaction, S2AL is rearranged via a Mg-dependent methyl migration to produce 3-hydroxy-3-methyl-2-ketobutyrate (HMKB). In the reductase reaction, this 2-ketoacid undergoes a metal-dependent reduction by NADPH to yield (R)-2,3-dihydroxy-isovalerate. The polypeptide is Ketol-acid reductoisomerase (NADP(+)) (Solibacter usitatus (strain Ellin6076)).